Reading from the N-terminus, the 285-residue chain is MTANFGAIAPERGNSPQLRWINVVFFGVFHALALLSPWFFSWSALGLLVFLHWLFGSIGICLGYHRLLSHKSFQVPKWLEYAIALIGALALQGGPIFWVGGHRQHHAHTEDIDLDPYSAQKGFWWSHILWIFYPRPEFFDYDTYKKYAPDLARQPFYCWLDRYFLLLQIPFALLLYVLGGWPFVFYGVFLRCVLLWHSTWFVNSASHLWGYRTFDADDGARNLWWVSIVTYGEGWHNNHHTYPHMAKSGLFWWEIDVTWWSIQLLQTLGLAKKVVSSPPQGATHG.

2 consecutive transmembrane segments (helical) span residues 20–40 (WINV…PWFF) and 44–64 (ALGL…CLGY). A Histidine box-1 motif is present at residues 65–70 (HRLLSH). The chain crosses the membrane as a helical span at residues 81 to 101 (YAIALIGALALQGGPIFWVGG). A Histidine box-2 motif is present at residues 102–106 (HRQHH). The helical transmembrane segment at 169 to 189 (IPFALLLYVLGGWPFVFYGVF) threads the bilayer. Residues 239-243 (HHTYP) carry the Histidine box-3 motif.

Belongs to the fatty acid desaturase type 2 family. It depends on Fe(2+) as a cofactor.

Its subcellular location is the membrane. It carries out the reaction a 1-acyl-2-hexadecanoyl-glycerolipid + 2 reduced [2Fe-2S]-[ferredoxin] + O2 + 2 H(+) = a 1-acyl-2-[(9Z)-hexadecenoyl]-glycerolipid + 2 oxidized [2Fe-2S]-[ferredoxin] + 2 H2O. It participates in lipid metabolism; fatty acid biosynthesis. Desaturase involved in fatty acid biosynthesis. Introduces a double bond at carbon 9 of palmitoyl groups (16:0) attached to the sn-2 position of the glycerol moiety of membrane glycerolipids. The sequence is that of sn-2 palmitoyl-lipid 9-desaturase from Nostoc sp. (strain 36).